Consider the following 1060-residue polypeptide: Carbamoyl phosphate synthase large chain (1060 aa).

The interval methionine 1–aspartate 400 is carboxyphosphate synthetic domain. Positions 127, 167, 173, 174, 206, 208, 213, 240, 241, 242, 283, and 297 each coordinate ATP. Positions aspartate 131 to valine 326 constitute an ATP-grasp 1 domain. Glutamine 283, glutamate 297, and asparagine 299 together coordinate Mg(2+). The Mn(2+) site is built by glutamine 283, glutamate 297, and asparagine 299. Positions isoleucine 401–valine 539 are oligomerization domain. Residues glutamate 540–aspartate 926 are carbamoyl phosphate synthetic domain. Positions threonine 664–methionine 858 constitute an ATP-grasp 2 domain. The ATP site is built by arginine 700, lysine 739, leucine 741, glutamate 746, glycine 771, valine 772, histidine 773, serine 774, glutamine 814, and glutamate 829. The Mg(2+) site is built by glutamine 814, glutamate 829, and asparagine 831. Glutamine 814, glutamate 829, and asparagine 831 together coordinate Mn(2+). The 136-residue stretch at methionine 925–methionine 1060 folds into the MGS-like domain. An allosteric domain region spans residues leucine 927–methionine 1060.

It belongs to the CarB family. In terms of assembly, composed of two chains; the small (or glutamine) chain promotes the hydrolysis of glutamine to ammonia, which is used by the large (or ammonia) chain to synthesize carbamoyl phosphate. Tetramer of heterodimers (alpha,beta)4. Mg(2+) is required as a cofactor. Requires Mn(2+) as cofactor.

It carries out the reaction hydrogencarbonate + L-glutamine + 2 ATP + H2O = carbamoyl phosphate + L-glutamate + 2 ADP + phosphate + 2 H(+). It catalyses the reaction hydrogencarbonate + NH4(+) + 2 ATP = carbamoyl phosphate + 2 ADP + phosphate + 2 H(+). It functions in the pathway amino-acid biosynthesis; L-arginine biosynthesis; carbamoyl phosphate from bicarbonate: step 1/1. It participates in pyrimidine metabolism; UMP biosynthesis via de novo pathway; (S)-dihydroorotate from bicarbonate: step 1/3. Its function is as follows. Large subunit of the glutamine-dependent carbamoyl phosphate synthetase (CPSase). CPSase catalyzes the formation of carbamoyl phosphate from the ammonia moiety of glutamine, carbonate, and phosphate donated by ATP, constituting the first step of 2 biosynthetic pathways, one leading to arginine and/or urea and the other to pyrimidine nucleotides. The large subunit (synthetase) binds the substrates ammonia (free or transferred from glutamine from the small subunit), hydrogencarbonate and ATP and carries out an ATP-coupled ligase reaction, activating hydrogencarbonate by forming carboxy phosphate which reacts with ammonia to form carbamoyl phosphate. The polypeptide is Carbamoyl phosphate synthase large chain (Methanothermobacter thermautotrophicus (strain ATCC 29096 / DSM 1053 / JCM 10044 / NBRC 100330 / Delta H) (Methanobacterium thermoautotrophicum)).